The primary structure comprises 370 residues: tRNA-specific 2-thiouridylase MnmA (370 aa).

Residues 12-19 and Met38 contribute to the ATP site; that span reads GLSGGVDS. The tract at residues 98-100 is interaction with target base in tRNA; the sequence is NPD. Cys103 (nucleophile) is an active-site residue. Cys103 and Cys201 are joined by a disulfide. Gly127 is an ATP binding site. The tract at residues 151 to 153 is interaction with tRNA; sequence KDQ. Cys201 (cysteine persulfide intermediate) is an active-site residue. Residues 319–320 form an interaction with tRNA region; that stretch reads RY.

It belongs to the MnmA/TRMU family.

The protein localises to the cytoplasm. The catalysed reaction is S-sulfanyl-L-cysteinyl-[protein] + uridine(34) in tRNA + AH2 + ATP = 2-thiouridine(34) in tRNA + L-cysteinyl-[protein] + A + AMP + diphosphate + H(+). Catalyzes the 2-thiolation of uridine at the wobble position (U34) of tRNA, leading to the formation of s(2)U34. The protein is tRNA-specific 2-thiouridylase MnmA of Verminephrobacter eiseniae (strain EF01-2).